Consider the following 259-residue polypeptide: Deoxyribose-phosphate aldolase (259 aa).

The active-site Proton donor/acceptor is Asp102. Residue Lys167 is the Schiff-base intermediate with acetaldehyde of the active site. The active-site Proton donor/acceptor is Lys201.

This sequence belongs to the DeoC/FbaB aldolase family. DeoC type 2 subfamily.

It localises to the cytoplasm. It carries out the reaction 2-deoxy-D-ribose 5-phosphate = D-glyceraldehyde 3-phosphate + acetaldehyde. The protein operates within carbohydrate degradation; 2-deoxy-D-ribose 1-phosphate degradation; D-glyceraldehyde 3-phosphate and acetaldehyde from 2-deoxy-alpha-D-ribose 1-phosphate: step 2/2. Its function is as follows. Catalyzes a reversible aldol reaction between acetaldehyde and D-glyceraldehyde 3-phosphate to generate 2-deoxy-D-ribose 5-phosphate. This chain is Deoxyribose-phosphate aldolase, found in Photorhabdus laumondii subsp. laumondii (strain DSM 15139 / CIP 105565 / TT01) (Photorhabdus luminescens subsp. laumondii).